Here is a 351-residue protein sequence, read N- to C-terminus: Protein-glutamate methylesterase/protein-glutamine glutaminase 2 (351 aa).

The 118-residue stretch at 4 to 121 folds into the Response regulatory domain; that stretch reads KVLVVDDSAL…PQDFNEYQDL (118 aa). 4-aspartylphosphate is present on D55. The CheB-type methylesterase domain occupies 156–348; it reads RVINTQLVAI…DKMLNYLASL (193 aa). Catalysis depends on residues S168, H194, and D290.

Belongs to the CheB family. Post-translationally, phosphorylated by CheA. Phosphorylation of the N-terminal regulatory domain activates the methylesterase activity.

It is found in the cytoplasm. It carries out the reaction [protein]-L-glutamate 5-O-methyl ester + H2O = L-glutamyl-[protein] + methanol + H(+). The enzyme catalyses L-glutaminyl-[protein] + H2O = L-glutamyl-[protein] + NH4(+). Its function is as follows. Involved in chemotaxis. Part of a chemotaxis signal transduction system that modulates chemotaxis in response to various stimuli. Catalyzes the demethylation of specific methylglutamate residues introduced into the chemoreceptors (methyl-accepting chemotaxis proteins or MCP) by CheR. Also mediates the irreversible deamidation of specific glutamine residues to glutamic acid. This Shewanella sp. (strain MR-7) protein is Protein-glutamate methylesterase/protein-glutamine glutaminase 2.